Consider the following 195-residue polypeptide: Interferon omega-1 (195 aa).

The signal sequence occupies residues 1-23 (MAFVLSLLMALVLVSYGPGGSLG). 2 disulfide bridges follow: Cys-24/Cys-122 and Cys-52/Cys-162.

The protein belongs to the alpha/beta interferon family.

It is found in the secreted. The polypeptide is Interferon omega-1 (IFNW1) (Bos taurus (Bovine)).